The chain runs to 610 residues: DNA mismatch repair protein MutL (610 aa).

A disordered region spans residues 351 to 406 (GQRPQAPWSAETSPSRPYQPAPAFSERPQASFDGLSTPTARAEPQFSPDPVSPGLA).

It belongs to the DNA mismatch repair MutL/HexB family.

Its function is as follows. This protein is involved in the repair of mismatches in DNA. It is required for dam-dependent methyl-directed DNA mismatch repair. May act as a 'molecular matchmaker', a protein that promotes the formation of a stable complex between two or more DNA-binding proteins in an ATP-dependent manner without itself being part of a final effector complex. In Rhizobium etli (strain ATCC 51251 / DSM 11541 / JCM 21823 / NBRC 15573 / CFN 42), this protein is DNA mismatch repair protein MutL.